The primary structure comprises 306 residues: Acetylglutamate kinase (306 aa).

Substrate is bound by residues 79-80, arginine 101, and asparagine 203; that span reads GG.

The protein belongs to the acetylglutamate kinase family. ArgB subfamily.

The protein localises to the cytoplasm. The catalysed reaction is N-acetyl-L-glutamate + ATP = N-acetyl-L-glutamyl 5-phosphate + ADP. It functions in the pathway amino-acid biosynthesis; L-arginine biosynthesis; N(2)-acetyl-L-ornithine from L-glutamate: step 2/4. Its function is as follows. Catalyzes the ATP-dependent phosphorylation of N-acetyl-L-glutamate. This Polaromonas naphthalenivorans (strain CJ2) protein is Acetylglutamate kinase.